A 212-amino-acid chain; its full sequence is Ribosomal RNA large subunit methyltransferase E (212 aa).

Positions 57, 59, 77, 93, and 122 each coordinate S-adenosyl-L-methionine. The active-site Proton acceptor is the Lys-162.

It belongs to the class I-like SAM-binding methyltransferase superfamily. RNA methyltransferase RlmE family.

Its subcellular location is the cytoplasm. It carries out the reaction uridine(2552) in 23S rRNA + S-adenosyl-L-methionine = 2'-O-methyluridine(2552) in 23S rRNA + S-adenosyl-L-homocysteine + H(+). Specifically methylates the uridine in position 2552 of 23S rRNA at the 2'-O position of the ribose in the fully assembled 50S ribosomal subunit. The polypeptide is Ribosomal RNA large subunit methyltransferase E (Coxiella burnetii (strain CbuK_Q154) (Coxiella burnetii (strain Q154))).